Reading from the N-terminus, the 327-residue chain is Lipid phosphate phosphatase 1 (327 aa).

A run of 6 helical transmembrane segments spans residues 51–71 (WIIL…SPFY), 93–113 (IWSV…CFYL), 118–138 (VYDL…TGVI), 187–207 (FPSG…LYLS), 217–237 (GHVA…LVGI), and 244–264 (WHHW…AAFC).

Belongs to the PA-phosphatase related phosphoesterase family. In terms of tissue distribution, strongly expressed in leaves, moderately in roots, weakly in floral hamps and flower buds, and not detected in adult flowers and seedpods.

Its subcellular location is the membrane. Its activity is regulated as follows. PA phosphatase activity inhibited by N-ethylmaleimide with an IC(50) value of 10 mM. Plays a general role in cellular responses to stress, may be by attenuating the signal produced by phospholipases. Exhibits both diacylglycerol pyrophosphate (DGPP) phosphatase and phosphatidate (PA) phosphatase activities. Substrate preference is diacylglycerol pyrophosphate &gt; phosphatidate. This chain is Lipid phosphate phosphatase 1 (LPP1), found in Arabidopsis thaliana (Mouse-ear cress).